The primary structure comprises 325 residues: tRNA pseudouridine synthase B (325 aa).

Catalysis depends on Asp49, which acts as the Nucleophile.

The protein belongs to the pseudouridine synthase TruB family. Type 1 subfamily.

The catalysed reaction is uridine(55) in tRNA = pseudouridine(55) in tRNA. Responsible for synthesis of pseudouridine from uracil-55 in the psi GC loop of transfer RNAs. This chain is tRNA pseudouridine synthase B, found in Mesorhizobium japonicum (strain LMG 29417 / CECT 9101 / MAFF 303099) (Mesorhizobium loti (strain MAFF 303099)).